A 73-amino-acid polypeptide reads, in one-letter code: Long neurotoxin 3 (73 aa).

5 disulfide bridges follow: Cys3-Cys21, Cys14-Cys42, Cys27-Cys31, Cys46-Cys57, and Cys58-Cys63.

The protein belongs to the three-finger toxin family. Long-chain subfamily. Type II alpha-neurotoxin sub-subfamily. In terms of tissue distribution, expressed by the venom gland.

The protein resides in the secreted. Functionally, binds with high affinity to muscular (alpha-1/CHRNA1) and neuronal (alpha-7/CHRNA7) nicotinic acetylcholine receptor (nAChR) and inhibits acetylcholine from binding to the receptor, thereby impairing neuromuscular and neuronal transmission. In Ophiophagus hannah (King cobra), this protein is Long neurotoxin 3.